A 148-amino-acid chain; its full sequence is Snaclec 3 (148 aa).

A signal peptide spans 1-23 (MGRFISVSFGLLVVFLSLSGTEA). Disulfide bonds link Cys-27-Cys-38, Cys-55-Cys-144, and Cys-121-Cys-136. The C-type lectin domain maps to 34 to 145 (YDQNCYKVFT…CSSTHNFVCK (112 aa)).

It belongs to the snaclec family. Heterodimer; disulfide-linked.

The protein resides in the secreted. Functionally, interferes with one step of hemostasis (modulation of platelet aggregation, or coagulation cascade, for example). In Daboia siamensis (Eastern Russel's viper), this protein is Snaclec 3.